Consider the following 308-residue polypeptide: Carbamate kinase (308 aa).

Belongs to the carbamate kinase family.

The protein localises to the cytoplasm. The enzyme catalyses hydrogencarbonate + NH4(+) + ATP = carbamoyl phosphate + ADP + H2O + H(+). The chain is Carbamate kinase from Synechocystis sp. (strain ATCC 27184 / PCC 6803 / Kazusa).